The chain runs to 171 residues: Crossover junction endodeoxyribonuclease RuvC (171 aa).

Residues D7, E74, and D147 contribute to the active site. D7, E74, and D147 together coordinate Mg(2+).

The protein belongs to the RuvC family. Homodimer which binds Holliday junction (HJ) DNA. The HJ becomes 2-fold symmetrical on binding to RuvC with unstacked arms; it has a different conformation from HJ DNA in complex with RuvA. In the full resolvosome a probable DNA-RuvA(4)-RuvB(12)-RuvC(2) complex forms which resolves the HJ. The cofactor is Mg(2+).

Its subcellular location is the cytoplasm. The catalysed reaction is Endonucleolytic cleavage at a junction such as a reciprocal single-stranded crossover between two homologous DNA duplexes (Holliday junction).. Its function is as follows. The RuvA-RuvB-RuvC complex processes Holliday junction (HJ) DNA during genetic recombination and DNA repair. Endonuclease that resolves HJ intermediates. Cleaves cruciform DNA by making single-stranded nicks across the HJ at symmetrical positions within the homologous arms, yielding a 5'-phosphate and a 3'-hydroxyl group; requires a central core of homology in the junction. The consensus cleavage sequence is 5'-(A/T)TT(C/G)-3'. Cleavage occurs on the 3'-side of the TT dinucleotide at the point of strand exchange. HJ branch migration catalyzed by RuvA-RuvB allows RuvC to scan DNA until it finds its consensus sequence, where it cleaves and resolves the cruciform DNA. This Acidobacterium capsulatum (strain ATCC 51196 / DSM 11244 / BCRC 80197 / JCM 7670 / NBRC 15755 / NCIMB 13165 / 161) protein is Crossover junction endodeoxyribonuclease RuvC.